Here is a 216-residue protein sequence, read N- to C-terminus: UPF0502 protein Spea_2482 (216 aa).

The protein belongs to the UPF0502 family.

In Shewanella pealeana (strain ATCC 700345 / ANG-SQ1), this protein is UPF0502 protein Spea_2482.